We begin with the raw amino-acid sequence, 234 residues long: PHD finger protein ING1 (234 aa).

A disordered region spans residues 129–166 (NNGKAGNAGEGGRGGRKKTRLATAASTAAASTGMTSSN). Positions 149-165 (LATAASTAAASTGMTSS) are enriched in low complexity. A PHD-type zinc finger spans residues 178–227 (PTYCICNQVSFGEMVACDNNACKIEWFHFGCVGLKEQPKGKWYCPECATV). Zn(2+) contacts are provided by cysteine 181, cysteine 183, cysteine 194, cysteine 199, histidine 205, cysteine 208, cysteine 221, and cysteine 224.

This sequence belongs to the ING family. In terms of assembly, interacts with H3K4me3 and to a lesser extent with H3K4me2. As to expression, ubiquitously expressed.

It is found in the nucleus. Its function is as follows. Histone-binding component that specifically recognizes H3 tails trimethylated on 'Lys-4' (H3K4me3), which mark transcription start sites of virtually all active genes. This Arabidopsis thaliana (Mouse-ear cress) protein is PHD finger protein ING1 (ING1).